The chain runs to 59 residues: Large ribosomal subunit protein bL32 (59 aa).

Over residues M1 to N15 the composition is skewed to basic residues. The interval M1–M48 is disordered.

Belongs to the bacterial ribosomal protein bL32 family.

In Opitutus terrae (strain DSM 11246 / JCM 15787 / PB90-1), this protein is Large ribosomal subunit protein bL32.